The sequence spans 220 residues: Protein-methionine-sulfoxide reductase heme-binding subunit MsrQ (220 aa).

6 helical membrane passes run 20–40, 51–71, 86–106, 122–142, 153–173, and 175–195; these read LWLL…LGAT, FEHL…LVTP, ALGL…MVLD, PFIT…LTSN, WSSL…HFLM, and VKSW…LLLW.

The protein belongs to the MsrQ family. Heterodimer of a catalytic subunit (MsrP) and a heme-binding subunit (MsrQ). FMN serves as cofactor. It depends on heme b as a cofactor.

Its subcellular location is the cell inner membrane. Part of the MsrPQ system that repairs oxidized periplasmic proteins containing methionine sulfoxide residues (Met-O), using respiratory chain electrons. Thus protects these proteins from oxidative-stress damage caused by reactive species of oxygen and chlorine generated by the host defense mechanisms. MsrPQ is essential for the maintenance of envelope integrity under bleach stress, rescuing a wide series of structurally unrelated periplasmic proteins from methionine oxidation. MsrQ provides electrons for reduction to the reductase catalytic subunit MsrP, using the quinone pool of the respiratory chain. The protein is Protein-methionine-sulfoxide reductase heme-binding subunit MsrQ of Brucella melitensis biotype 2 (strain ATCC 23457).